A 298-amino-acid polypeptide reads, in one-letter code: Protoheme IX farnesyltransferase (298 aa).

The next 9 helical transmembrane spans lie at 24–44 (VIQL…PGLP), 49–69 (LQLA…AAAF), 100–120 (LLFS…WVNP), 121–141 (LTMW…TVIL), 149–169 (IVIG…AMAG), 175–195 (ALIL…ALAL), 220–240 (LMVL…YVYG), 244–264 (WLYL…AFYL), and 277–297 (FRFS…DHYL).

Belongs to the UbiA prenyltransferase family. Protoheme IX farnesyltransferase subfamily.

The protein resides in the cell inner membrane. The enzyme catalyses heme b + (2E,6E)-farnesyl diphosphate + H2O = Fe(II)-heme o + diphosphate. It functions in the pathway porphyrin-containing compound metabolism; heme O biosynthesis; heme O from protoheme: step 1/1. Converts heme B (protoheme IX) to heme O by substitution of the vinyl group on carbon 2 of heme B porphyrin ring with a hydroxyethyl farnesyl side group. The polypeptide is Protoheme IX farnesyltransferase (Albidiferax ferrireducens (strain ATCC BAA-621 / DSM 15236 / T118) (Rhodoferax ferrireducens)).